A 1029-amino-acid chain; its full sequence is Ig-like and fibronectin type-III domain-containing protein 1 (1029 aa).

A signal peptide spans 1-22; that stretch reads MCNVAEDPSSFSTITIATTCRA. Residues 23 to 918 are Extracellular-facing; that stretch reads EWPKVSPCIA…RRSASKGSSS (896 aa). N-linked (GlcNAc...) asparagine glycosylation is found at N36, N93, N120, and N165. A Fibronectin type-III 1 domain is found at 90–181; sequence APGNVTISEL…TAKLFSTLPT (92 aa). The 43-residue stretch at 185–227 folds into the WR1 domain; the sequence is PLCTIGEPIYMNDGRVMICDAVNPCPNGFRCTGAGSDLSYCCP. N-linked (GlcNAc...) asparagine glycosylation is found at N257, N374, N409, N442, N482, N507, and N552. Fibronectin type-III domains lie at 330 to 417 and 427 to 523; these read AVRN…TKPA and APEK…AQKD. Positions 619-710 constitute an Ig-like C2-type domain; the sequence is ASVTMKKDKI…SRVEASSEVI (92 aa). C640 and C693 form a disulfide bridge. N-linked (GlcNAc...) asparagine glycosylation occurs at N753. One can recognise a Fibronectin type-III 4 domain in the interval 817–909; it reads APSEVSNVRI…SAIPKDSEPR (93 aa). The helical transmembrane segment at 919 to 939 threads the bilayer; sequence AFWIVVILVVFGVLIAGLAVL. The Cytoplasmic segment spans residues 940 to 1029; that stretch reads SKRRELPYPI…NGMRYAKLET (90 aa). Residues 988 to 1021 form a disordered region; that stretch reads SATTGTAAATQSEWQSANLEANSTTDNSHEYRNG. Polar residues predominate over residues 998 to 1013; sequence QSEWQSANLEANSTTD.

The protein localises to the cell membrane. The sequence is that of Ig-like and fibronectin type-III domain-containing protein 1 from Caenorhabditis elegans.